Consider the following 573-residue polypeptide: Probable D-xylulose kinase A (573 aa).

Residues His97, Arg168, Asp284, and Asn285 each contribute to the substrate site. ATP contacts are provided by residues Trp366, 471–472, and Asn475; that span reads GG.

It belongs to the FGGY kinase family.

It is found in the cytoplasm. It carries out the reaction D-xylulose + ATP = D-xylulose 5-phosphate + ADP + H(+). Functionally, highly specific D-xylulose kinase which participates in the catabolism of xylose. Xylose is a major component of hemicelluloses such as xylan. Most fungi utilize D-xylose via three enzymatic reactions, xylose reductase (XR), xylitol dehydrogenase (XDH), and xylulokinase, to form xylulose 5-phosphate, which enters pentose phosphate pathway. The sequence is that of Probable D-xylulose kinase A (xkiA) from Aspergillus fumigatus (strain ATCC MYA-4609 / CBS 101355 / FGSC A1100 / Af293) (Neosartorya fumigata).